Reading from the N-terminus, the 146-residue chain is Hemoglobin subunit beta-1 (146 aa).

Residues 2-146 form the Globin domain; sequence HWTAEEKSAI…VAHALAHRYH (145 aa). Heme b contacts are provided by His-63 and His-92.

Belongs to the globin family. As to quaternary structure, heterotetramer of two alpha chains and two beta chains. Red blood cells.

Functionally, involved in oxygen transport from the lung to the various peripheral tissues. This is Hemoglobin subunit beta-1 from Drymarchon melanurus erebennus (Texas indigo snake).